A 490-amino-acid polypeptide reads, in one-letter code: Betaine aldehyde dehydrogenase (490 aa).

K(+) contacts are provided by threonine 26, isoleucine 27, and aspartate 93. 150 to 152 (GAW) lines the NAD(+) pocket. Lysine 162 (charge relay system) is an active-site residue. An NAD(+)-binding site is contributed by 176–179 (KPSE). Valine 180 is a K(+) binding site. Residue 230–233 (GTST) coordinates NAD(+). Leucine 246 is a K(+) binding site. The active-site Proton acceptor is glutamate 252. The NAD(+) site is built by glycine 254, cysteine 286, and glutamate 387. Cysteine 286 acts as the Nucleophile in catalysis. Cysteine 286 is modified (cysteine sulfenic acid (-SOH)). K(+) contacts are provided by lysine 457 and glycine 460. Glutamate 464 serves as the catalytic Charge relay system.

The protein belongs to the aldehyde dehydrogenase family. In terms of assembly, dimer of dimers. K(+) is required as a cofactor.

The catalysed reaction is betaine aldehyde + NAD(+) + H2O = glycine betaine + NADH + 2 H(+). The protein operates within amine and polyamine biosynthesis; betaine biosynthesis via choline pathway; betaine from betaine aldehyde: step 1/1. Its function is as follows. Involved in the biosynthesis of the osmoprotectant glycine betaine. Catalyzes the irreversible oxidation of betaine aldehyde to the corresponding acid. This is Betaine aldehyde dehydrogenase from Pseudomonas aeruginosa (strain UCBPP-PA14).